Reading from the N-terminus, the 2804-residue chain is MNGDMPHVPITTLAGIASLTDLLNQLPLPSPLPATTTKSLLFNARIAEEVNCLLACRDDNLVSQLVHSLNQVSTDHIELKDNLGSDDPEGDIPVLLQAVLARSPNVFREKSMQNRYVQSGMMMSQYKLSQNSMHSSPASSNYQQTTISHSPSSRFVPPQTSSGNRFMPQQNSPVPSPYAPQSPAGYMPYSHPSSYTTHPQMQQASVSSPIVAGGLRNIHDNKVSGPLSGNSANHHADNPRHGSSEDYLHMVHRLSSDDGDSSTMRNAASFPLRSPQPVCSPAGSEGTPKGSRPPLILQSQSLPCSSPRDVPPDILLDSPERKQKKQKKMKLGKDEKEQSEKAAMYDIISSPSKDSTKLTLRLSRVRSSDMDQQEDMISGVENSNVSENDIPFNVQYPGQTSKTPITPQDINRPLNAAQCLSQQEQTAFLPANQVPVLQQNTSVAAKQPQTSVVQNQQQISQQGPIYDEVELDALAEIERIERESAIERERFSKEVQDKDKPLKKRKQDSYPQEAGGATGGNRPASQETGSTGNGSRPALMVSIDLHQAGRVDSQASITQDSDSIKKPEEIKQCNDAPVSVLQEDIVGSLKSTPENHPETPKKKSDPELSKSEMKQSESRLAESKPNENRLVETKSSENKLETKVETQTEELKQNESRTTECKQNESTIVEPKQNENRLSDTKPNDNKQNNGRSETTKSRPETPKQKGESRPETPKQKSDGHPETPKQKGDGRPETPKQKGESRPETPKQKNEGRPETPKHRHDNRRDSGKPSTEKKPEVSKHKQDTKSDSPRLKSERAEALKQRPDGRSVSESLRRDHDNKQKSDDRGESERHRGDQSRVRRPETLRSSSRNEHGIKSDSSKTDKLERKHRHESGDSRERPSSGEQKSRPDSPRVKQGDSNKSRSDKLGFKSPTSKDDKRTEGNKSKVDTNKAHPDNKAEFPSYLLGGRSGALKNFVIPKIKRDKDGNVTQETKKMEMKGEPKDKVEKIGLVEDLNKGAKPVVVLQKLSLDDVQKLIKDREDKSRSSLKPIKNKPSKSNKGSIDQSVLKELPPELLAEIESTMPLCERVKMNKRKRSTVNEKPKYAEISSDEDNDSDEAFESSRKRHKKDDDKAWEYEERDRRSSGDHRRSGHSHEGRRSSGGGRYRNRSPSDSDMEDYSPPPSLSEVARKMKKKEKQKKRKAYEPKLTPEEMMDSSTFKRFTASIENILDNLEDMDFTAFGDDDEIPQELLLGKHQLNELGSESAKIKAMGIMDKLSTDKTVKVLNILEKNIQDGSKLSTLLNHNNDTEEEERLWRDLIMERVTKSADACLTTINIMTSPNMPKAVYIEDVIERVIQYTKFHLQNTLYPQYDPVYRLDPHGGGLLSSKAKRAKCSTHKQRVIVMLYNKVCDIVSSLSELLEIQLLTDTTILQVSSMGITPFFVENVSELQLCAIKLVTAVFSRYEKHRQLILEEIFTSLARLPTSKRSLRNFRLNSSDMDGEPMYIQMVTALVLQLIQCVVHLPSSEKDSNAEEDSNKKIDQDVVITNSYETAMRTAQNFLSIFLKKCGSKQGEEDYRPLFENFVQDLLSTVNKPEWPAAELLLSLLGRLLVHQFSNKSTEMALRVASLDYLGTVAARLRKDAVTSKMDQGSIERILKQVSGGEDEIQQLQKALLDYLDENTETDPSLVFSRKFYIAQWFRDTTLETEKAMKSQKDEESSEGTHHAKEIETTGQIMHRAENRKKFLRSIIKTTPSQFSTLKMNSDTVDYDDACLIVRYLASMRPFAQSFDIYLTQILRVLGENAIAVRTKAMKCLSEVVAVDPSILARLDMQRGVHGRLMDNSTSVREAAVELLGRFVLCRPQLAEQYYDMLIERILDTGISVRKRVIKILRDICIEQPTFPKITEMCVKMIRRVNDEEGIKKLVNETFQKLWFTPTPHNDKEAMTRKILNITDVVAACRDTGYDWFEQLLQNLLKSEEDSSYKPVKKACTQLVDNLVEHILKYEESLADSDNKGVNSGRLVACITTLFLFSKIRPQLMVKHAMTMQPYLTTKCSTQNDFMVICNVAKILELVVPLMEHPSETFLATIEEDLMKLIIKYGMTVVQHCVSCLGAVVNKVTQNFKFVWACFNRYYGAISKLKSQHQEDPNNTSLLTNKPALLRSLFTVGALCRHFDFDLEDFKGNSKVNIKDKVLELLMYFTKHSDEEVQTKAIIGLGFAFIQHPSLMFEQEVKNLYNNILSDKNSSVNLKIQVLKNLQTYLQEEDTRMQQADRDWKKVAKQEDLKEMGDVSSGMSSSIMQLYLKQVLEAFFHTQSSVRHFALNVIALTLNQGLIHPVQCVPYLIAMGTDPEPAMRNKADQQLVEIDKKYAGFIHMKAVAGMKMSYQVQQAINTCLKDPVRGFRQDESSSALCSHLYSMIRGNRQHRRAFLISLLNLFDDTAKTDVTMLLYIADNLACFPYQTQEEPLFIMHHIDITLSVSGSNLLQSFKESMVKDKRKERKSSPSKENESSDSEEEVSRPRKSRKRVDSDSDSDSEDDINSVMKCLPENSAPLIEFANVSQGILLLLMLKQHLKNLCGFSDSKIQKYSPSESAKVYDKAINRKTGVHFHPKQTLDFLRSDMANSKITEEVKRSIVKQYLDFKLLMEHLDPDEEEEEGEVSASTNARNKAITSLLGGGSPKNNTAAETEDDESDGEDRGGGTSGSLRRSKRNSDSTELAAQMNESVDVMDVIAICCPKYKDRPQIARVVQKTSSGFSVQWMAGSYSGSWTEAKRRDGRKLVPWVDTIKESDIIYKKIALTSANKLTNKVVQTLRSLYAAKDGTSS.

Polar residues-rich tracts occupy residues 128–173 (LSQN…QNSP) and 191–208 (HPSS…SVSS). Residues 128–340 (LSQNSMHSSP…LGKDEKEQSE (213 aa)) are disordered. Residues S150 and S162 each carry the phosphoserine modification. Residues 234 to 249 (HHADNPRHGSSEDYLH) are compositionally biased toward basic and acidic residues. Phosphoserine is present on residues S243, S256, S274, S280, S284, S301, S306, and S318. A compositionally biased stretch (basic and acidic residues) spans 331–340 (LGKDEKEQSE). The residue at position 350 (S350) is a Phosphoserine. The segment covering 482 to 500 (RESAIERERFSKEVQDKDK) has biased composition (basic and acidic residues). The disordered stretch occupies residues 482–946 (RESAIERERF…NKAEFPSYLL (465 aa)). Polar residues predominate over residues 523-534 (PASQETGSTGNG). 4 stretches are compositionally biased toward basic and acidic residues: residues 562-572 (DSIKKPEEIKQ), 593-663 (PENH…ECKQ), 672-685 (KQNE…KPND), and 694-939 (ETTK…DNKA). Residues T713 and T746 each carry the phosphothreonine modification. Position 912 is a phosphoserine (S912). The short motif at 996-1009 (NKGAKPVVVLQKLS) is the PxVxL motif element. 2 disordered regions span residues 1017-1047 (IKDR…DQSV) and 1060-1191 (ESTM…LTPE). Residue K1082 is modified to N6-acetyllysine. Residues S1089, S1090, and S1096 each carry the phosphoserine modification. Positions 1089–1100 (SSDEDNDSDEAF) are enriched in acidic residues. Residues 1109–1139 (KDDDKAWEYEERDRRSSGDHRRSGHSHEGRR) are compositionally biased toward basic and acidic residues. S1150, S1152, and S1154 each carry phosphoserine. Residue Y1159 is modified to Phosphotyrosine. S1160 carries the post-translational modification Phosphoserine. Positions 1171–1182 (KMKKKEKQKKRK) are enriched in basic residues. T1189 carries the phosphothreonine modification. S1197 carries the post-translational modification Phosphoserine. A disordered region spans residues 1691-1710 (AMKSQKDEESSEGTHHAKEI). 5 HEAT repeats span residues 1767 to 1805 (AQSF…VDPS), 1843 to 1881 (PQLA…EQPT), 1945 to 1984 (YDWF…HILK), 2227 to 2267 (VNLK…LKEM), and 2313 to 2351 (LIHP…KYAG). Positions 2473-2489 (VKDKRKERKSSPSKENE) are enriched in basic and acidic residues. Disordered regions lie at residues 2473–2520 (VKDK…DDIN) and 2651–2696 (TSLL…DSTE). Phosphoserine is present on residues S2493, S2509, S2511, S2513, S2515, S2652, and S2658. Residues 2510–2519 (DSDSDSEDDI) show a composition bias toward acidic residues. T2667 is modified (phosphothreonine). S2672 bears the Phosphoserine mark.

This sequence belongs to the SCC2/Nipped-B family. In terms of assembly, heterodimerizes with MAU2/SCC4 to form the cohesin loading complex. The NIPBL-MAU2 heterodimer interacts with the cohesin complex composed of SMC1A/B and SMC3 heterodimer, RAD21 and STAG1/SA1. NIPBL directly contacts all members of the complex, RAD21, SMC1A/B, SMC3 and STAG1. Interacts directly (via PxVxL motif) with CBX5. Interacts with ZNF609 (via N-terminus). Interacts with the multiprotein complex Integrator. Interacts (via PxVxL motif) with CBX3. Interacts with BRD4. As to expression, widely expressed. Highly expressed in heart, skeletal muscle, fetal and adult liver, fetal and adult kidney. Expressed at intermediates level in thymus, placenta, peripheral leukocyte and small intestine. Weakly or not expressed in brain, colon, spleen and lung.

It is found in the nucleus. It localises to the chromosome. Plays an important role in the loading of the cohesin complex on to DNA. Forms a heterodimeric complex (also known as cohesin loading complex) with MAU2/SCC4 which mediates the loading of the cohesin complex onto chromatin. Plays a role in cohesin loading at sites of DNA damage. Its recruitment to double-strand breaks (DSBs) sites occurs in a CBX3-, RNF8- and RNF168-dependent manner whereas its recruitment to UV irradiation-induced DNA damage sites occurs in a ATM-, ATR-, RNF8- and RNF168-dependent manner. Along with ZNF609, promotes cortical neuron migration during brain development by regulating the transcription of crucial genes in this process. Preferentially binds promoters containing paused RNA polymerase II. Up-regulates the expression of SEMA3A, NRP1, PLXND1 and GABBR2 genes, among others. This chain is Nipped-B-like protein (NIPBL), found in Homo sapiens (Human).